Consider the following 354-residue polypeptide: Homeobox-leucine zipper protein HOX27 (354 aa).

The disordered stretch occupies residues 98-175 (SVAAGAPGME…DDEGASARKK (78 aa)). The span at 148–157 (QGGGGGGGGE) shows a compositional bias: gly residues. Positions 171–230 (SARKKLRLSKEQSAFLEESFKEHSTLNPKQKVALAKQLNLRPRQVEVWFQNRRARTKLKQ) form a DNA-binding region, homeobox. Positions 229–273 (KQTEVDCEYLKRCCETLTEENRRLHKELAELRALKTARPFYMHLP) are leucine-zipper. Residues 294-323 (STSAPAAATSPAAAPTAAARTAVASPEPHR) form a disordered region.

The protein belongs to the HD-ZIP homeobox family. Class II subfamily. Expressed in seedlings, roots, stems, leaf sheaths and blades and panicles.

It is found in the nucleus. Functionally, probable transcription factor. The chain is Homeobox-leucine zipper protein HOX27 (HOX27) from Oryza sativa subsp. indica (Rice).